The primary structure comprises 440 residues: ATP-dependent protease ATPase subunit HslU (440 aa).

ATP is bound by residues valine 18, glycine 60–glutamate 65, aspartate 253, glutamate 318, and arginine 390.

It belongs to the ClpX chaperone family. HslU subfamily. In terms of assembly, a double ring-shaped homohexamer of HslV is capped on each side by a ring-shaped HslU homohexamer. The assembly of the HslU/HslV complex is dependent on binding of ATP.

The protein resides in the cytoplasm. Functionally, ATPase subunit of a proteasome-like degradation complex; this subunit has chaperone activity. The binding of ATP and its subsequent hydrolysis by HslU are essential for unfolding of protein substrates subsequently hydrolyzed by HslV. HslU recognizes the N-terminal part of its protein substrates and unfolds these before they are guided to HslV for hydrolysis. The sequence is that of ATP-dependent protease ATPase subunit HslU from Methylococcus capsulatus (strain ATCC 33009 / NCIMB 11132 / Bath).